Consider the following 204-residue polypeptide: FMN-dependent NADH:quinone oxidoreductase (204 aa).

Residue Ser-9 participates in FMN binding.

Belongs to the azoreductase type 1 family. Homodimer. FMN serves as cofactor.

The catalysed reaction is 2 a quinone + NADH + H(+) = 2 a 1,4-benzosemiquinone + NAD(+). The enzyme catalyses N,N-dimethyl-1,4-phenylenediamine + anthranilate + 2 NAD(+) = 2-(4-dimethylaminophenyl)diazenylbenzoate + 2 NADH + 2 H(+). Quinone reductase that provides resistance to thiol-specific stress caused by electrophilic quinones. Its function is as follows. Also exhibits azoreductase activity. Catalyzes the reductive cleavage of the azo bond in aromatic azo compounds to the corresponding amines. This chain is FMN-dependent NADH:quinone oxidoreductase, found in Thiobacillus denitrificans (strain ATCC 25259 / T1).